A 402-amino-acid chain; its full sequence is RNA-binding protein 42 (402 aa).

Residues 240 to 275 (ETASDDSVIGPSMPEPEPVHVEPVDTSTEDKKKGKQ) form a disordered region. Residues 256–275 (EPVHVEPVDTSTEDKKKGKQ) are compositionally biased toward basic and acidic residues. The 79-residue stretch at 303–381 (FRIFCGDLGN…RPIKLRKSAW (79 aa)) folds into the RRM domain.

It belongs to the RRM RBM42 family.

The protein localises to the nucleus. Its subcellular location is the cytoplasm. May bind RNA. The chain is RNA-binding protein 42 (rbm42) from Danio rerio (Zebrafish).